A 410-amino-acid chain; its full sequence is Lissencephaly-1 homolog A (410 aa).

The region spanning 7–39 (QRDELNRAIADYLRSNGYEEAYSTFKKEAELDM) is the LisH domain. Residues 56–82 (TSVIRLQKKVMELESKLNEAKEEITLG) are a coiled coil. WD repeat units lie at residues 106-147 (GHRS…RTLK), 148-187 (GHTDSVQDISFDHTGKLLASCSADMTIKLWDFQGFECIRT), 190-229 (GHDHNVSSVAIMPNGDHIVSASRDKTIKMWEVATGYCVKT), 232-271 (GHREWVRMVRPNQDGTLIASCSNDQTVRVWVVASKECKAE), 274-333 (EHEH…CLMT), 336-375 (GHDNWVRGMLVHPGGKFILSCADDKTLRIWDYKNKRCMKT), and 378-410 (AHEHFVTSLDFHKNAPYVVTGSVDQTVKVWECR).

The protein belongs to the WD repeat LIS1/nudF family. In terms of assembly, can self-associate. Component of the cytosolic PAF-AH (I) heterotetrameric enzyme, which is composed of PAFAH1B1 (beta), PAFAH1B2 (alpha2) and PAFAH1B3 (alpha1) subunits. The catalytic activity of the enzyme resides in the alpha1 (PAFAH1B3) and alpha2 (PAFAH1B2) subunits, whereas the beta subunit (PAFAH1B1) has regulatory activity. Trimer formation is not essential for the catalytic activity. Interacts with dynein, dynactin, nde1 and ndel1.

Its subcellular location is the cytoplasm. The protein resides in the cytoskeleton. The protein localises to the microtubule organizing center. It is found in the centrosome. Functionally, regulatory subunit (beta subunit) of the cytosolic type I platelet-activating factor (PAF) acetylhydrolase (PAF-AH (I)), an enzyme that catalyzes the hydrolyze of the acetyl group at the sn-2 position of PAF and its analogs and participates in PAF inactivation. Regulates the PAF-AH (I) activity in a catalytic dimer composition-dependent manner. Positively regulates the activity of the minus-end directed microtubule motor protein dynein. May enhance dynein-mediated microtubule sliding by targeting dynein to the microtubule plus end. Required for several dynein- and microtubule-dependent processes such as the maintenance of Golgi integrity, the peripheral transport of microtubule fragments and the coupling of the nucleus and centrosome. May be required for proliferation of neuronal precursors and neuronal migration. The polypeptide is Lissencephaly-1 homolog A (pafah1b1-1) (Salmo salar (Atlantic salmon)).